The primary structure comprises 662 residues: Glutathione hydrolase 7 (662 aa).

Topologically, residues 1-106 are cytoplasmic; sequence MAAENEASQE…ASECSCRQDG (106 aa). Phosphoserine occurs at positions 17, 72, 79, and 83. The interval 26–90 is disordered; that stretch reads SFPRLPEDEP…DGSPLRETRK (65 aa). Residues 72–83 are compositionally biased toward low complexity; it reads SSSSEMGSQDGS. A helical; Signal-anchor for type II membrane protein transmembrane segment spans residues 107-127; sequence LTVIVTACLTFATGVTVALIM. At 128–662 the chain is on the extracellular side; sequence QIYFGDPQIF…SPDAAGATIL (535 aa). Asparagine 198, asparagine 267, asparagine 283, asparagine 330, asparagine 353, asparagine 394, asparagine 452, asparagine 519, and asparagine 586 each carry an N-linked (GlcNAc...) asparagine glycan.

The protein belongs to the gamma-glutamyltransferase family. In terms of assembly, heterodimer composed of the light and heavy chains. The active site is located in the light chain. In terms of processing, cleaved by autocatalysis into a large and a small subunit and the autocatalytic cleavage is essential to the functional activation of the enzyme.

It localises to the membrane. The catalysed reaction is an N-terminal (5-L-glutamyl)-[peptide] + an alpha-amino acid = 5-L-glutamyl amino acid + an N-terminal L-alpha-aminoacyl-[peptide]. It catalyses the reaction glutathione + H2O = L-cysteinylglycine + L-glutamate. It carries out the reaction an S-substituted glutathione + H2O = an S-substituted L-cysteinylglycine + L-glutamate. Its pathway is sulfur metabolism; glutathione metabolism. Functionally, hydrolyzes and transfers gamma-glutamyl moieties from glutathione and other gamma-glutamyl compounds to acceptors. In Bos taurus (Bovine), this protein is Glutathione hydrolase 7.